The following is a 144-amino-acid chain: Large ribosomal subunit protein uL11 (144 aa).

Belongs to the universal ribosomal protein uL11 family. Part of the ribosomal stalk of the 50S ribosomal subunit. Interacts with L10 and the large rRNA to form the base of the stalk. L10 forms an elongated spine to which L12 dimers bind in a sequential fashion forming a multimeric L10(L12)X complex. In terms of processing, one or more lysine residues are methylated.

Its function is as follows. Forms part of the ribosomal stalk which helps the ribosome interact with GTP-bound translation factors. The chain is Large ribosomal subunit protein uL11 from Rickettsia bellii (strain OSU 85-389).